Reading from the N-terminus, the 396-residue chain is Putative nickel insertion protein (396 aa).

This sequence belongs to the LarC family.

This chain is Putative nickel insertion protein, found in Methanococcoides burtonii (strain DSM 6242 / NBRC 107633 / OCM 468 / ACE-M).